The sequence spans 332 residues: Ketol-acid reductoisomerase (NADP(+)) (332 aa).

The 182-residue stretch at 1-182 folds into the KARI N-terminal Rossmann domain; that stretch reads MAVIYYDKDC…GSNRAGILET (182 aa). NADP(+)-binding positions include 25–28 and 83–86; these read YGAQ and DTSQ. H108 is an active-site residue. G134 serves as a coordination point for NADP(+). In terms of domain architecture, KARI C-terminal knotted spans 183–328; sequence TFAEETETDL…AELRSMMSWL (146 aa). Positions 191, 195, 227, and 231 each coordinate Mg(2+). Residue S252 coordinates substrate.

This sequence belongs to the ketol-acid reductoisomerase family. Mg(2+) is required as a cofactor.

The catalysed reaction is (2R)-2,3-dihydroxy-3-methylbutanoate + NADP(+) = (2S)-2-acetolactate + NADPH + H(+). The enzyme catalyses (2R,3R)-2,3-dihydroxy-3-methylpentanoate + NADP(+) = (S)-2-ethyl-2-hydroxy-3-oxobutanoate + NADPH + H(+). Its pathway is amino-acid biosynthesis; L-isoleucine biosynthesis; L-isoleucine from 2-oxobutanoate: step 2/4. It participates in amino-acid biosynthesis; L-valine biosynthesis; L-valine from pyruvate: step 2/4. Functionally, involved in the biosynthesis of branched-chain amino acids (BCAA). Catalyzes an alkyl-migration followed by a ketol-acid reduction of (S)-2-acetolactate (S2AL) to yield (R)-2,3-dihydroxy-isovalerate. In the isomerase reaction, S2AL is rearranged via a Mg-dependent methyl migration to produce 3-hydroxy-3-methyl-2-ketobutyrate (HMKB). In the reductase reaction, this 2-ketoacid undergoes a metal-dependent reduction by NADPH to yield (R)-2,3-dihydroxy-isovalerate. In Dehalococcoides mccartyi (strain ATCC BAA-2100 / JCM 16839 / KCTC 5957 / BAV1), this protein is Ketol-acid reductoisomerase (NADP(+)).